A 257-amino-acid polypeptide reads, in one-letter code: Adenylate kinase (257 aa).

51-56 (GAGKGT) provides a ligand contact to ATP. Residues 71–100 (ATGDMLRSQVAKKTELGKEAKKIMDQGGLV) are NMP. AMP contacts are provided by residues Thr72, Arg77, 98–100 (GLV), 127–130 (GFPR), and Gln134. Residues 168–205 (GRLVHPASGRSYHKIFNPPKQEMKDDITGEPLIQRSDD) form an LID region. Residues Arg169 and 178 to 179 (SY) each bind ATP. Residues Arg202 and Arg213 each coordinate AMP. Residue Gln241 coordinates ATP.

This sequence belongs to the adenylate kinase family. AK2 subfamily. As to quaternary structure, monomer.

Its subcellular location is the cytoplasm. The protein localises to the cytosol. The protein resides in the mitochondrion intermembrane space. The catalysed reaction is AMP + ATP = 2 ADP. Functionally, catalyzes the reversible transfer of the terminal phosphate group between ATP and AMP. Plays an important role in cellular energy homeostasis and in adenine nucleotide metabolism. Adenylate kinase activity is critical for regulation of the phosphate utilization and the AMP de novo biosynthesis pathways. The sequence is that of Adenylate kinase (adk1) from Aspergillus terreus (strain NIH 2624 / FGSC A1156).